We begin with the raw amino-acid sequence, 126 residues long: MAKQAKARRLAGIEAMAKVRTLRTSPRKLNLVAQSIRGLKVQRALNELEFSHKRIARDVRKALYSAISNAENNHNLDIDNLVVAEAFVGKNLIMKRFHARARGRASRIEKPFSEITIVVREQGEAA.

The protein belongs to the universal ribosomal protein uL22 family. In terms of assembly, part of the 50S ribosomal subunit.

In terms of biological role, this protein binds specifically to 23S rRNA; its binding is stimulated by other ribosomal proteins, e.g. L4, L17, and L20. It is important during the early stages of 50S assembly. It makes multiple contacts with different domains of the 23S rRNA in the assembled 50S subunit and ribosome. Functionally, the globular domain of the protein is located near the polypeptide exit tunnel on the outside of the subunit, while an extended beta-hairpin is found that lines the wall of the exit tunnel in the center of the 70S ribosome. The chain is Large ribosomal subunit protein uL22 from Phenylobacterium zucineum (strain HLK1).